A 244-amino-acid chain; its full sequence is ATP synthase subunit b 2 (244 aa).

Residues T2 to L22 traverse the membrane as a helical segment.

It belongs to the ATPase B chain family. As to quaternary structure, F-type ATPases have 2 components, F(1) - the catalytic core - and F(0) - the membrane proton channel. F(1) has five subunits: alpha(3), beta(3), gamma(1), delta(1), epsilon(1). F(0) has three main subunits: a(1), b(2) and c(10-14). The alpha and beta chains form an alternating ring which encloses part of the gamma chain. F(1) is attached to F(0) by a central stalk formed by the gamma and epsilon chains, while a peripheral stalk is formed by the delta and b chains.

The protein localises to the cell inner membrane. Its function is as follows. F(1)F(0) ATP synthase produces ATP from ADP in the presence of a proton or sodium gradient. F-type ATPases consist of two structural domains, F(1) containing the extramembraneous catalytic core and F(0) containing the membrane proton channel, linked together by a central stalk and a peripheral stalk. During catalysis, ATP synthesis in the catalytic domain of F(1) is coupled via a rotary mechanism of the central stalk subunits to proton translocation. Functionally, component of the F(0) channel, it forms part of the peripheral stalk, linking F(1) to F(0). The protein is ATP synthase subunit b 2 of Gluconobacter oxydans (strain 621H) (Gluconobacter suboxydans).